The chain runs to 243 residues: Precursor of CEP9 (243 aa).

An N-terminal signal peptide occupies residues 1–26 (MKLLSITLTSIVISMVFYQTPITTEA). A propeptide spanning residues 28 to 44 (SLRKTNDQDHFKAGFTD) is cleaved from the precursor. Disordered stretches follow at residues 42–63 (FTDD…KKGN), 91–173 (KTGS…VKGF), and 189–243 (NGQD…EPKA). Pro-48 carries the hydroxyproline; partial modification. Hydroxyproline is present on Pro-51. Residue Pro-55 is modified to Hydroxyproline; partial. A propeptide spanning residues 60 to 96 (KKGNVNVEGFQDDFKPTEGRKLLKTNVQDHFKTGSTD) is cleaved from the precursor. Pro-100, Pro-103, and Pro-107 each carry hydroxyproline. Residues 112-148 (KKGNVNVESSEDDFKHKEGRKLQQTNGQNHFKTGSTD) constitute a propeptide that is removed on maturation. The segment covering 133 to 147 (LQQTNGQNHFKTGST) has biased composition (polar residues). Hydroxyproline occurs at positions 152, 155, and 159. Residues 164–200 (KKGHANVKGFKDDFAPTEEIRLQKMNGQDHFKTGSTD) constitute a propeptide that is removed on maturation. Pro-204, Pro-207, and Pro-211 each carry hydroxyproline. Residues 216–219 (KKGD) constitute a propeptide that is removed on maturation. Hydroxyproline is present on residues Pro-223, Pro-226, and Pro-230. Positions 235–243 (AVKNDEPKA) are excised as a propeptide.

This sequence belongs to the C-terminally encoded plant signaling peptide (CEP) family. As to quaternary structure, interacts with CEP receptors (e.g. CEPR1 and CEPR2). In terms of processing, hydroxylated peptide is more active than non-hydroxylated peptide. The mature small signaling peptide is generated by proteolytic processing of the longer precursor. As to expression, expressed in lateral root primordia and in lateral roots excluding the meristem region. Also present in the aerial tissues, such as leaf petioles and the shoot apex region.

Its subcellular location is the secreted. The protein resides in the extracellular space. It is found in the apoplast. Extracellular signaling peptide that represses primary root growth rate and significantly inhibits lateral root formation. Modulates leaf morphology. Regulates systemic nitrogen (N)-demand signaling. Mediates up-regulation of genes involved in N uptake and assimilation pathways. In Arabidopsis thaliana (Mouse-ear cress), this protein is Precursor of CEP9.